Consider the following 377-residue polypeptide: NADH dehydrogenase [ubiquinone] 1 alpha subcomplex subunit 9, mitochondrial (377 aa).

The transit peptide at 1 to 35 (MAAAAQSRVVRVLSMSRSAITAIATSVCHGPPCRQ) directs the protein to the mitochondrion. Lys175 is subject to N6-succinyllysine. N6-acetyllysine occurs at positions 189 and 370.

The protein belongs to the complex I NDUFA9 subunit family. As to quaternary structure, complex I is composed of 45 different subunits. This a component of the hydrophobic protein fraction. Interacts with BLOC1S1. Interacts with SLC2A4. Interacts with CLOCK. Interacts with RAB5IF. Requires FAD as cofactor. Acetylated on lysine residues. BLOC1S1 is required for acetylation. Acetylated by CLOCK in a circadian manner.

The protein resides in the mitochondrion matrix. In terms of biological role, accessory subunit of the mitochondrial membrane respiratory chain NADH dehydrogenase (Complex I), that is believed not to be involved in catalysis. Complex I functions in the transfer of electrons from NADH to the respiratory chain. The immediate electron acceptor for the enzyme is believed to be ubiquinone. This Pan troglodytes (Chimpanzee) protein is NADH dehydrogenase [ubiquinone] 1 alpha subcomplex subunit 9, mitochondrial (NDUFA9).